We begin with the raw amino-acid sequence, 425 residues long: Glutamyl-tRNA reductase (425 aa).

Residues 47 to 50 (TCNR), S107, 112 to 114 (EDQ), and Q118 contribute to the substrate site. Catalysis depends on C48, which acts as the Nucleophile. 187-192 (GAGHMA) is a binding site for NADP(+).

It belongs to the glutamyl-tRNA reductase family. As to quaternary structure, homodimer.

It catalyses the reaction (S)-4-amino-5-oxopentanoate + tRNA(Glu) + NADP(+) = L-glutamyl-tRNA(Glu) + NADPH + H(+). Its pathway is porphyrin-containing compound metabolism; protoporphyrin-IX biosynthesis; 5-aminolevulinate from L-glutamyl-tRNA(Glu): step 1/2. It participates in porphyrin-containing compound metabolism; chlorophyll biosynthesis. Catalyzes the NADPH-dependent reduction of glutamyl-tRNA(Glu) to glutamate 1-semialdehyde (GSA). This is Glutamyl-tRNA reductase from Roseiflexus castenholzii (strain DSM 13941 / HLO8).